The chain runs to 332 residues: Putative D-threonate 4-phosphate dehydrogenase (332 aa).

Histidine 140 and threonine 141 together coordinate substrate. A divalent metal cation-binding residues include histidine 170, histidine 214, and histidine 270. 3 residues coordinate substrate: lysine 278, asparagine 287, and arginine 296.

The protein belongs to the PdxA family. PdxA2 subfamily. Homodimer. The cofactor is a divalent metal cation.

The enzyme catalyses 4-O-phospho-D-threonate + NAD(+) = dihydroxyacetone phosphate + CO2 + NADH. In terms of biological role, catalyzes the NAD-dependent oxidation and subsequent decarboxylation of D-threonate 4-phosphate to produce dihydroxyacetone phosphate (DHAP). The chain is Putative D-threonate 4-phosphate dehydrogenase from Oceanobacillus iheyensis (strain DSM 14371 / CIP 107618 / JCM 11309 / KCTC 3954 / HTE831).